The chain runs to 219 residues: Large ribosomal subunit protein uL16 (219 aa).

It belongs to the universal ribosomal protein uL16 family. Component of the small ribosomal subunit. Mature ribosomes consist of a small (40S) and a large (60S) subunit. The 40S subunit contains about 33 different proteins and 1 molecule of RNA (18S). The 60S subunit contains about 49 different proteins and 3 molecules of RNA (25S, 5.8S and 5S).

The polypeptide is Large ribosomal subunit protein uL16 (RPL10) (Solanum melongena (Eggplant)).